We begin with the raw amino-acid sequence, 60 residues long: Cytotoxin 2a (60 aa).

4 disulfides stabilise this stretch: C3/C21, C14/C38, C42/C53, and C54/C59.

Belongs to the three-finger toxin family. Short-chain subfamily. Type IA cytotoxin sub-subfamily. As to quaternary structure, monomer in solution; Homodimer and oligomer in the presence of negatively charged lipids forming a pore with a size ranging between 20 and 30 Angstroms. As to expression, expressed by the venom gland.

It localises to the secreted. It is found in the target cell membrane. In terms of biological role, shows cytolytic activity on many different cells by forming pore in lipid membranes. In vivo, increases heart rate or kills the animal by cardiac arrest. In addition, it binds to heparin with high affinity, interacts with Kv channel-interacting protein 1 (KCNIP1) in a calcium-independent manner, and binds to integrin alpha-V/beta-3 (ITGAV/ITGB3) with moderate affinity. Preferentially binds acidic phospholipids like phosphatidylserine, phosphatidic acid and phosphatidyl glycerol. Has hemolytic activity towards human erythrocytes (EC(50)=1.024 uM) and cytolytic activity towards various cell lines. This is Cytotoxin 2a from Naja naja (Indian cobra).